Consider the following 293-residue polypeptide: 33 kDa chaperonin (293 aa).

Intrachain disulfides connect C235/C237 and C267/C270.

Belongs to the HSP33 family. Post-translationally, under oxidizing conditions two disulfide bonds are formed involving the reactive cysteines. Under reducing conditions zinc is bound to the reactive cysteines and the protein is inactive.

It is found in the cytoplasm. In terms of biological role, redox regulated molecular chaperone. Protects both thermally unfolding and oxidatively damaged proteins from irreversible aggregation. Plays an important role in the bacterial defense system toward oxidative stress. This is 33 kDa chaperonin from Deinococcus radiodurans (strain ATCC 13939 / DSM 20539 / JCM 16871 / CCUG 27074 / LMG 4051 / NBRC 15346 / NCIMB 9279 / VKM B-1422 / R1).